The sequence spans 270 residues: Tryptophan synthase alpha chain (270 aa).

Residues Glu-49 and Asp-60 each act as proton acceptor in the active site.

This sequence belongs to the TrpA family. In terms of assembly, tetramer of two alpha and two beta chains.

It carries out the reaction (1S,2R)-1-C-(indol-3-yl)glycerol 3-phosphate + L-serine = D-glyceraldehyde 3-phosphate + L-tryptophan + H2O. The protein operates within amino-acid biosynthesis; L-tryptophan biosynthesis; L-tryptophan from chorismate: step 5/5. Functionally, the alpha subunit is responsible for the aldol cleavage of indoleglycerol phosphate to indole and glyceraldehyde 3-phosphate. The chain is Tryptophan synthase alpha chain from Buchnera aphidicola subsp. Diuraphis noxia.